Here is an 89-residue protein sequence, read N- to C-terminus: Small ribosomal subunit protein uS19 (89 aa).

It belongs to the universal ribosomal protein uS19 family.

Its function is as follows. Protein S19 forms a complex with S13 that binds strongly to the 16S ribosomal RNA. The sequence is that of Small ribosomal subunit protein uS19 from Rhodopirellula baltica (strain DSM 10527 / NCIMB 13988 / SH1).